A 422-amino-acid chain; its full sequence is Tyrosine-protein kinase STYK1 (422 aa).

The chain crosses the membrane as a helical span at residues 26–46; that stretch reads VIIVPTLLVTIFLILLGVILW. The Protein kinase domain occupies 114-384; that stretch reads SEVLEQICSG…ELRLRLEAAI (271 aa). Residues 120-128 and K147 each bind ATP; that span reads ICSGSCGPI. D251 acts as the Proton acceptor in catalysis.

This sequence belongs to the protein kinase superfamily. Tyr protein kinase family. As to expression, widely expressed. Highly expressed in brain, placenta and prostate. Expressed in tumor cells such as hepatoma cells L-02, cervix carcinoma cells HeLa, ovary cancer cells Ho8910 and chronic myelogenous leukemia cells K-562, but not in other tumor cells such as epidermoid carcinoma (A-431). Undetectable in most normal lung tissues, widely expressed in lung cancers.

Its subcellular location is the membrane. It carries out the reaction L-tyrosyl-[protein] + ATP = O-phospho-L-tyrosyl-[protein] + ADP + H(+). Functionally, probable tyrosine protein-kinase, which has strong transforming capabilities on a variety of cell lines. When overexpressed, it can also induce tumor cell invasion as well as metastasis in distant organs. May act by activating both MAP kinase and phosphatidylinositol 3'-kinases (PI3K) pathways. This chain is Tyrosine-protein kinase STYK1 (STYK1), found in Homo sapiens (Human).